Reading from the N-terminus, the 126-residue chain is Small ribosomal subunit protein uS11 (126 aa).

Belongs to the universal ribosomal protein uS11 family. Part of the 30S ribosomal subunit.

Functionally, located on the platform of the 30S subunit. This Methanosarcina barkeri (strain Fusaro / DSM 804) protein is Small ribosomal subunit protein uS11.